A 180-amino-acid polypeptide reads, in one-letter code: Kappa-casein (180 aa).

Residues 1–21 form the signal peptide; it reads MMKHFLLVVNILAVTLPFLAA. O-linked (GalNAc...) threonine glycosylation is found at Thr-132, Thr-142, Thr-147, and Thr-153. At Ser-160 the chain carries Phosphoserine; alternate. A glycan (O-linked (GalNAc...) serine; alternate) is linked at Ser-160.

The protein belongs to the kappa-casein family. As to expression, mammary gland specific. Secreted in milk.

It is found in the secreted. Functionally, kappa-casein stabilizes micelle formation, preventing casein precipitation in milk. This Oryctolagus cuniculus (Rabbit) protein is Kappa-casein (CSN3).